We begin with the raw amino-acid sequence, 407 residues long: Na(+)-translocating NADH-quinone reductase subunit F (407 aa).

A helical membrane pass occupies residues 6-26 (IFLAIGMFTAIVLGLVAIILV). Residues 35 to 127 (GDVTIQINGE…DMQIRVPEEV (93 aa)) form the 2Fe-2S ferredoxin-type domain. [2Fe-2S] cluster-binding residues include Cys-70, Cys-76, Cys-79, and Cys-111. One can recognise an FAD-binding FR-type domain in the interval 130–269 (VKKWECTVES…YGPFGEFFAK (140 aa)). The interval 272-389 (EAEMVFIGGG…PMMNAAVIKM (118 aa)) is catalytic.

This sequence belongs to the NqrF family. Composed of six subunits; NqrA, NqrB, NqrC, NqrD, NqrE and NqrF. [2Fe-2S] cluster is required as a cofactor. It depends on FAD as a cofactor.

It localises to the cell inner membrane. The catalysed reaction is a ubiquinone + n Na(+)(in) + NADH + H(+) = a ubiquinol + n Na(+)(out) + NAD(+). Its function is as follows. NQR complex catalyzes the reduction of ubiquinone-1 to ubiquinol by two successive reactions, coupled with the transport of Na(+) ions from the cytoplasm to the periplasm. The first step is catalyzed by NqrF, which accepts electrons from NADH and reduces ubiquinone-1 to ubisemiquinone by a one-electron transfer pathway. The polypeptide is Na(+)-translocating NADH-quinone reductase subunit F (Pseudomonas aeruginosa (strain ATCC 15692 / DSM 22644 / CIP 104116 / JCM 14847 / LMG 12228 / 1C / PRS 101 / PAO1)).